Reading from the N-terminus, the 342-residue chain is Nucleoid-associated protein Shewmr4_2217 (342 aa).

The protein belongs to the YejK family.

It localises to the cytoplasm. The protein resides in the nucleoid. The chain is Nucleoid-associated protein Shewmr4_2217 from Shewanella sp. (strain MR-4).